We begin with the raw amino-acid sequence, 277 residues long: Small ribosomal subunit protein uS3 (277 aa).

The KH type-2 domain occupies 43–111 (IRELMSKGMD…QIQLNILEVK (69 aa)). The segment at 217-277 (AAQQAAAPSS…AEANNAEGGK (61 aa)) is disordered. Residues 245–258 (NDRNDRGGRRERDS) are compositionally biased toward basic and acidic residues. Positions 259–277 (AAAPQQNSAAEANNAEGGK) are enriched in low complexity.

It belongs to the universal ribosomal protein uS3 family. In terms of assembly, part of the 30S ribosomal subunit. Forms a tight complex with proteins S10 and S14.

Its function is as follows. Binds the lower part of the 30S subunit head. Binds mRNA in the 70S ribosome, positioning it for translation. In Kocuria rhizophila (strain ATCC 9341 / DSM 348 / NBRC 103217 / DC2201), this protein is Small ribosomal subunit protein uS3.